The sequence spans 638 residues: 1-deoxy-D-xylulose-5-phosphate synthase (638 aa).

Residues H81 and 122 to 124 (GHS) contribute to the thiamine diphosphate site. D153 is a Mg(2+) binding site. Residues 154–155 (GS), N182, Y293, and E377 contribute to the thiamine diphosphate site. N182 serves as a coordination point for Mg(2+).

Belongs to the transketolase family. DXPS subfamily. In terms of assembly, homodimer. It depends on Mg(2+) as a cofactor. Thiamine diphosphate is required as a cofactor.

The catalysed reaction is D-glyceraldehyde 3-phosphate + pyruvate + H(+) = 1-deoxy-D-xylulose 5-phosphate + CO2. It functions in the pathway metabolic intermediate biosynthesis; 1-deoxy-D-xylulose 5-phosphate biosynthesis; 1-deoxy-D-xylulose 5-phosphate from D-glyceraldehyde 3-phosphate and pyruvate: step 1/1. Catalyzes the acyloin condensation reaction between C atoms 2 and 3 of pyruvate and glyceraldehyde 3-phosphate to yield 1-deoxy-D-xylulose-5-phosphate (DXP). The chain is 1-deoxy-D-xylulose-5-phosphate synthase from Oleidesulfovibrio alaskensis (strain ATCC BAA-1058 / DSM 17464 / G20) (Desulfovibrio alaskensis).